A 181-amino-acid chain; its full sequence is Adenine phosphoribosyltransferase (181 aa).

The protein belongs to the purine/pyrimidine phosphoribosyltransferase family. As to quaternary structure, homodimer.

The protein localises to the cytoplasm. The catalysed reaction is AMP + diphosphate = 5-phospho-alpha-D-ribose 1-diphosphate + adenine. It functions in the pathway purine metabolism; AMP biosynthesis via salvage pathway; AMP from adenine: step 1/1. Catalyzes a salvage reaction resulting in the formation of AMP, that is energically less costly than de novo synthesis. This is Adenine phosphoribosyltransferase from Rhodopseudomonas palustris (strain HaA2).